We begin with the raw amino-acid sequence, 661 residues long: DnaJ protein ERDJ2B (661 aa).

Topologically, residues 1 to 8 (MAESEENS) are lumenal. A helical membrane pass occupies residues 9-29 (VLFPIFILTMMAIPLVPYTFV). At 30–65 (KLSRAFSKKQRSIHCQCLECDRSGKYKRSISQSISS) the chain is on the cytoplasmic side. A helical transmembrane segment spans residues 66–86 (FTSCSNLTVVLLWIVMIFLIY). The Lumenal segment spans residues 87-190 (HTKNMSRESQ…FILNMNGESG (104 aa)). Residue asparagine 90 is glycosylated (N-linked (GlcNAc...) asparagine). Positions 99–164 (EPFGILGLEP…LSRENFEKYG (66 aa)) constitute a J domain. The chain crosses the membrane as a helical span at residues 191 to 211 (GILLLCTVGLCILLPLVIASI). One can recognise an SEC63 domain in the interval 206-597 (LVIASIYLWR…IGCDQKTSLK (392 aa)). The Cytoplasmic segment spans residues 212 to 661 (YLWRSSKYTG…SSEESGSDEE (450 aa)). The interval 608–661 (EGENAEEGLEEEDDEIEEEDYESEYSEDEEDKKRGSKKKVNKESSSEESGSDEE) is disordered. Positions 609-637 (GENAEEGLEEEDDEIEEEDYESEYSEDEE) are enriched in acidic residues.

In terms of assembly, interacts with OEP61/TPR7. As to expression, expressed in leaves, flower buds and flowers.

The protein localises to the endoplasmic reticulum membrane. In terms of biological role, required for integral membrane and secreted preprotein translocation across the endoplasmic reticulum membrane. The sequence is that of DnaJ protein ERDJ2B (ERDJ2B) from Arabidopsis thaliana (Mouse-ear cress).